We begin with the raw amino-acid sequence, 119 residues long: Large ribosomal subunit protein bL20 (119 aa).

The protein belongs to the bacterial ribosomal protein bL20 family.

Its function is as follows. Binds directly to 23S ribosomal RNA and is necessary for the in vitro assembly process of the 50S ribosomal subunit. It is not involved in the protein synthesizing functions of that subunit. The polypeptide is Large ribosomal subunit protein bL20 (Xanthomonas oryzae pv. oryzae (strain KACC10331 / KXO85)).